The following is a 195-amino-acid chain: Der GTPase-activating protein YihI (195 aa).

Residues 1 to 81 (MSRTKKTRRI…KAVVKEVKDP (81 aa)) are disordered. 3 stretches are compositionally biased toward basic and acidic residues: residues 9–23 (RITDIMPARKTDKPK), 38–49 (TRYELDAQAREE), and 66–81 (DPAEQKKAVVKEVKDP).

This sequence belongs to the YihI family. Interacts with Der.

Functionally, a GTPase-activating protein (GAP) that modifies Der/EngA GTPase function. May play a role in ribosome biogenesis. The protein is Der GTPase-activating protein YihI of Mannheimia haemolytica (Pasteurella haemolytica).